We begin with the raw amino-acid sequence, 329 residues long: Beta-ketoacyl-[acyl-carrier-protein] synthase III (329 aa).

Active-site residues include C123 and H256. An ACP-binding region spans residues 257-261 (QANIR). The active site involves N286.

This sequence belongs to the thiolase-like superfamily. FabH family. Homodimer.

The protein localises to the cytoplasm. The catalysed reaction is malonyl-[ACP] + acetyl-CoA + H(+) = 3-oxobutanoyl-[ACP] + CO2 + CoA. The protein operates within lipid metabolism; fatty acid biosynthesis. In terms of biological role, catalyzes the condensation reaction of fatty acid synthesis by the addition to an acyl acceptor of two carbons from malonyl-ACP. Catalyzes the first condensation reaction which initiates fatty acid synthesis and may therefore play a role in governing the total rate of fatty acid production. Possesses both acetoacetyl-ACP synthase and acetyl transacylase activities. Its substrate specificity determines the biosynthesis of branched-chain and/or straight-chain of fatty acids. This chain is Beta-ketoacyl-[acyl-carrier-protein] synthase III, found in Burkholderia mallei (strain NCTC 10247).